Consider the following 117-residue polypeptide: UPF0295 protein YgzB (117 aa).

2 consecutive transmembrane segments (helical) span residues 13–33 (TFAL…IFFK) and 41–61 (LFMI…FWIG).

This sequence belongs to the UPF0295 family.

It localises to the cell membrane. The sequence is that of UPF0295 protein YgzB (ygzB) from Bacillus subtilis (strain 168).